The sequence spans 318 residues: Ribonuclease Z (318 aa).

Positions 62, 64, 66, 67, 139, 210, and 268 each coordinate Zn(2+). D66 serves as the catalytic Proton acceptor.

Belongs to the RNase Z family. In terms of assembly, homodimer. The cofactor is Zn(2+).

It catalyses the reaction Endonucleolytic cleavage of RNA, removing extra 3' nucleotides from tRNA precursor, generating 3' termini of tRNAs. A 3'-hydroxy group is left at the tRNA terminus and a 5'-phosphoryl group is left at the trailer molecule.. In terms of biological role, zinc phosphodiesterase, which displays some tRNA 3'-processing endonuclease activity. Probably involved in tRNA maturation, by removing a 3'-trailer from precursor tRNA. This Microcystis aeruginosa (strain NIES-843 / IAM M-2473) protein is Ribonuclease Z.